We begin with the raw amino-acid sequence, 256 residues long: Thiazole synthase (256 aa).

Catalysis depends on lysine 96, which acts as the Schiff-base intermediate with DXP. Residues glycine 157, 183–184 (AG), and 205–206 (NT) each bind 1-deoxy-D-xylulose 5-phosphate.

This sequence belongs to the ThiG family. In terms of assembly, homotetramer. Forms heterodimers with either ThiH or ThiS.

It localises to the cytoplasm. It carries out the reaction [ThiS sulfur-carrier protein]-C-terminal-Gly-aminoethanethioate + 2-iminoacetate + 1-deoxy-D-xylulose 5-phosphate = [ThiS sulfur-carrier protein]-C-terminal Gly-Gly + 2-[(2R,5Z)-2-carboxy-4-methylthiazol-5(2H)-ylidene]ethyl phosphate + 2 H2O + H(+). It functions in the pathway cofactor biosynthesis; thiamine diphosphate biosynthesis. In terms of biological role, catalyzes the rearrangement of 1-deoxy-D-xylulose 5-phosphate (DXP) to produce the thiazole phosphate moiety of thiamine. Sulfur is provided by the thiocarboxylate moiety of the carrier protein ThiS. In vitro, sulfur can be provided by H(2)S. The chain is Thiazole synthase from Bacillus mycoides (strain KBAB4) (Bacillus weihenstephanensis).